The following is a 216-amino-acid chain: Pyrophosphatase PpaX (216 aa).

Asp12 serves as the catalytic Nucleophile.

The protein belongs to the HAD-like hydrolase superfamily. PpaX family. Mg(2+) serves as cofactor.

The catalysed reaction is diphosphate + H2O = 2 phosphate + H(+). Its function is as follows. Hydrolyzes pyrophosphate formed during P-Ser-HPr dephosphorylation by HPrK/P. Might play a role in controlling the intracellular pyrophosphate pool. In Bacillus pumilus (strain SAFR-032), this protein is Pyrophosphatase PpaX.